A 475-amino-acid polypeptide reads, in one-letter code: UDP-N-acetylmuramate--L-alanine ligase (475 aa).

119 to 125 serves as a coordination point for ATP; the sequence is GTHGKTT.

This sequence belongs to the MurCDEF family.

It is found in the cytoplasm. It carries out the reaction UDP-N-acetyl-alpha-D-muramate + L-alanine + ATP = UDP-N-acetyl-alpha-D-muramoyl-L-alanine + ADP + phosphate + H(+). The protein operates within cell wall biogenesis; peptidoglycan biosynthesis. In terms of biological role, cell wall formation. This is UDP-N-acetylmuramate--L-alanine ligase from Wigglesworthia glossinidia brevipalpis.